A 122-amino-acid chain; its full sequence is MADITAELVSVERLLWTGKATMVTAETTEGEIGVLPGHEPMVGQLIDNGVVTIHPVDGERLVAAVQGGFLSVSENKITVLADWSIWASEVDEAQAQEDLKSERELTRSRGDAALRATRRLNS.

Residues 97-112 (EDLKSERELTRSRGDA) show a composition bias toward basic and acidic residues. The disordered stretch occupies residues 97-122 (EDLKSERELTRSRGDAALRATRRLNS).

The protein belongs to the ATPase epsilon chain family. As to quaternary structure, F-type ATPases have 2 components, CF(1) - the catalytic core - and CF(0) - the membrane proton channel. CF(1) has five subunits: alpha(3), beta(3), gamma(1), delta(1), epsilon(1). CF(0) has three main subunits: a, b and c.

The protein resides in the cell membrane. Produces ATP from ADP in the presence of a proton gradient across the membrane. This chain is ATP synthase epsilon chain, found in Corynebacterium aurimucosum (strain ATCC 700975 / DSM 44827 / CIP 107346 / CN-1) (Corynebacterium nigricans).